Consider the following 358-residue polypeptide: UDP-3-O-acylglucosamine N-acyltransferase (358 aa).

H248 (proton acceptor) is an active-site residue.

It belongs to the transferase hexapeptide repeat family. LpxD subfamily. As to quaternary structure, homotrimer.

It catalyses the reaction a UDP-3-O-[(3R)-3-hydroxyacyl]-alpha-D-glucosamine + a (3R)-hydroxyacyl-[ACP] = a UDP-2-N,3-O-bis[(3R)-3-hydroxyacyl]-alpha-D-glucosamine + holo-[ACP] + H(+). Its pathway is bacterial outer membrane biogenesis; LPS lipid A biosynthesis. Functionally, catalyzes the N-acylation of UDP-3-O-acylglucosamine using 3-hydroxyacyl-ACP as the acyl donor. Is involved in the biosynthesis of lipid A, a phosphorylated glycolipid that anchors the lipopolysaccharide to the outer membrane of the cell. This chain is UDP-3-O-acylglucosamine N-acyltransferase, found in Synechococcus sp. (strain WH7803).